A 363-amino-acid chain; its full sequence is L-arabinitol 4-dehydrogenase (363 aa).

Residues Cys-53, His-78, Glu-79, Cys-108, Cys-111, Cys-114, Cys-122, and Glu-163 each contribute to the Zn(2+) site. NAD(+) is bound by residues 190–191 (PI), Asp-211, Arg-216, Ile-282, and 306–308 (QYR).

This sequence belongs to the zinc-containing alcohol dehydrogenase family. As to quaternary structure, homotetramer. It depends on Zn(2+) as a cofactor.

It catalyses the reaction L-arabinitol + NAD(+) = L-xylulose + NADH + H(+). The protein operates within carbohydrate degradation; L-arabinose degradation via L-arabinitol; D-xylulose 5-phosphate from L-arabinose (fungal route): step 2/5. Catalyzes the NAD-dependent oxidation of L-arabinitol to L-xylulose in the fungal L-arabinose catabolic pathway. L-arabinose catabolism is important for using plant material as a carbon source. Not active on D-arabinitol, D-sorbitol and D-mannitol. The polypeptide is L-arabinitol 4-dehydrogenase (ard-1) (Neurospora crassa (strain ATCC 24698 / 74-OR23-1A / CBS 708.71 / DSM 1257 / FGSC 987)).